The following is a 325-amino-acid chain: NADH-quinone oxidoreductase subunit H (325 aa).

The next 8 membrane-spanning stretches (helical) occupy residues 11–31 (ILIS…CGAF), 81–101 (VIFT…FAIV), 114–134 (IGIL…LFAG), 149–169 (ASAQ…GVVA), 186–206 (MWNV…GVAV), 237–257 (FFVG…TLFF), 265–285 (LPPF…FILI), and 304–324 (VCLP…LYNA).

The protein belongs to the complex I subunit 1 family. NDH-1 is composed of 13 different subunits. Subunits NuoA, H, J, K, L, M, N constitute the membrane sector of the complex.

It localises to the cell inner membrane. The enzyme catalyses a quinone + NADH + 5 H(+)(in) = a quinol + NAD(+) + 4 H(+)(out). NDH-1 shuttles electrons from NADH, via FMN and iron-sulfur (Fe-S) centers, to quinones in the respiratory chain. The immediate electron acceptor for the enzyme in this species is believed to be ubiquinone. Couples the redox reaction to proton translocation (for every two electrons transferred, four hydrogen ions are translocated across the cytoplasmic membrane), and thus conserves the redox energy in a proton gradient. This subunit may bind ubiquinone. The protein is NADH-quinone oxidoreductase subunit H of Serratia proteamaculans (strain 568).